Here is a 1153-residue protein sequence, read N- to C-terminus: ATP-dependent helicase/deoxyribonuclease subunit B (1153 aa).

The 289-residue stretch at 1–289 (MELNAYIGRA…KHLEQNFNAL (289 aa)) folds into the UvrD-like helicase ATP-binding domain. 8 to 15 (GRAGTGKS) contacts ATP. Positions 269 to 583 (LDVQRFIHND…SIGTMDLAKV (315 aa)) constitute a UvrD-like helicase C-terminal domain. 4 residues coordinate [4Fe-4S] cluster: Cys-784, Cys-1110, Cys-1113, and Cys-1119.

The protein belongs to the helicase family. AddB/RexB type 1 subfamily. Heterodimer of AddA and AddB. Requires Mg(2+) as cofactor. [4Fe-4S] cluster serves as cofactor.

In terms of biological role, the heterodimer acts as both an ATP-dependent DNA helicase and an ATP-dependent, dual-direction single-stranded exonuclease. Recognizes the chi site generating a DNA molecule suitable for the initiation of homologous recombination. The AddB subunit has 5' -&gt; 3' nuclease activity but not helicase activity. This chain is ATP-dependent helicase/deoxyribonuclease subunit B, found in Staphylococcus saprophyticus subsp. saprophyticus (strain ATCC 15305 / DSM 20229 / NCIMB 8711 / NCTC 7292 / S-41).